We begin with the raw amino-acid sequence, 595 residues long: 73 kDa paraflagellar rod protein (595 aa).

Residues 294–317 (DAEATKRHAANKEKSDRYIRENED) are disordered. A calmodulin-binding region spans residues 317–337 (DRQEETWNKIQDLERQLQKLG).

As to quaternary structure, heterodimer of a 69 kDa and a 73 kDa protein.

The protein resides in the cell projection. The protein localises to the cilium. It is found in the flagellum. Its subcellular location is the cytoplasm. It localises to the cytoskeleton. Its function is as follows. Major component of the paraflagellar rod (PFR). The PFR is a highly ordered lattices of fibrous proteins that are located inside the flagellum and assume a fixed orientation with respect to the microtubular axoneme. This is 73 kDa paraflagellar rod protein (PFRC) from Trypanosoma brucei brucei.